Consider the following 233-residue polypeptide: Bcl-2-like protein 1 (233 aa).

A BH4 motif is present at residues 4 to 24; it reads SNRELVVDFLSYKLSQKGYSW. The segment at 28–71 is disordered; sequence SDVEENRTEAPEGTESEMETPSAINGNPSWHLADSPAVNGATGH. At serine 49 the chain carries Phosphoserine; by PLK3. Serine 62 is modified (phosphoserine; by CDK1). A BH3 motif is present at residues 86-100; it reads VKQALREAGDEFELR. Positions 129 to 148 match the BH1 motif; sequence ELFRDGVNWGRIVAFFSFGG. A BH2 motif is present at residues 180–195; sequence PWIQENGGWDTFVELY. The helical transmembrane segment at 210 to 226 threads the bilayer; the sequence is FNRWFLTGMTVAGVVLL.

This sequence belongs to the Bcl-2 family. In terms of assembly, homodimer. Interacts with BCL2L11. Interacts with BAD. Interacts with PGAM5. Interacts with HEBP2. Interacts with p53/TP53 and BBC3; interaction with BBC3 disrupts the interaction with p53/TP53. Interacts with ATP5F1A and ATP5F1B; the interactions mediate the association of isoform Bcl-X(L) with the mitochondrial membrane ATP synthase F(1)F(0) ATP synthase. Interacts with VDAC1. Interacts with BCL2L11 (via BH3). Interacts with RNF183. Interacts with GIMAP3/IAN4 and GIMAP5/IAN5. Interacts with GIMAP5 and HSPA8/HSC70; the interaction between HSPA8 and BCL2L1 is impaired in the absence of GIMAP5. Interacts with isoform 4 of CLU; this interaction releases and activates BAX and promotes cell death. Forms heterodimers with BAX, BAK or BCL2; heterodimerization with BAX does not seem to be required for anti-apoptotic activity. Interacts with isoform 1 of SIVA1; the interaction inhibits the anti-apoptotic activity. Interacts with IKZF3. Interacts with RTL10/BOP. Interacts with DNM1L and CLTA; DNM1L and BCL2L1 isoform BCL-X(L) may form a complex in synaptic vesicles that also contains clathrin and MFF. Interacts (via the loop between motifs BH4 and BH3) with NLRP1 (via LRR repeats), but not with NLRP2, NLRP3, NLRP4, PYCARD, nor MEFV. Interacts with BECN1. Post-translationally, proteolytically cleaved by caspases during apoptosis. The cleaved protein, lacking the BH4 motif, has pro-apoptotic activity. In terms of processing, phosphorylated on Ser-62 by CDK1. This phosphorylation is partial in normal mitotic cells, but complete in G2-arrested cells upon DNA-damage, thus promoting subsequent apoptosis probably by triggering caspases-mediated proteolysis. Phosphorylated by PLK3, leading to regulate the G2 checkpoint and progression to cytokinesis during mitosis. Phosphorylation at Ser-49 appears during the S phase and G2, disappears rapidly in early mitosis during prometaphase, metaphase and early anaphase, and re-appears during telophase and cytokinesis. Ubiquitinated by RNF183 during prolonged ER stress, leading to degradation by the proteosome. Bcl-X(S) is expressed at high levels in cells that undergo a high rate of turnover, such as developing lymphocytes. In contrast, Bcl-X(L) is found in tissues containing long-lived postmitotic cells, such as adult brain.

It localises to the mitochondrion inner membrane. The protein localises to the mitochondrion outer membrane. It is found in the mitochondrion matrix. Its subcellular location is the cytoplasmic vesicle. The protein resides in the secretory vesicle. It localises to the synaptic vesicle membrane. The protein localises to the cytoplasm. It is found in the cytosol. Its subcellular location is the cytoskeleton. The protein resides in the microtubule organizing center. It localises to the centrosome. The protein localises to the nucleus membrane. Its function is as follows. Potent inhibitor of cell death. Inhibits activation of caspases. Appears to regulate cell death by blocking the voltage-dependent anion channel (VDAC) by binding to it and preventing the release of the caspase activator, CYC1, from the mitochondrial membrane. Also acts as a regulator of G2 checkpoint and progression to cytokinesis during mitosis. In terms of biological role, isoform Bcl-X(L) also regulates presynaptic plasticity, including neurotransmitter release and recovery, number of axonal mitochondria as well as size and number of synaptic vesicle clusters. During synaptic stimulation, increases ATP availability from mitochondria through regulation of mitochondrial membrane ATP synthase F(1)F(0) activity and regulates endocytic vesicle retrieval in hippocampal neurons through association with DMN1L and stimulation of its GTPase activity in synaptic vesicles. May attenuate inflammation impairing NLRP1-inflammasome activation, hence CASP1 activation and IL1B release. Isoform Bcl-X(S) promotes apoptosis. In Homo sapiens (Human), this protein is Bcl-2-like protein 1 (BCL2L1).